Consider the following 299-residue polypeptide: Syntenin-1 (299 aa).

Ser-2 bears the N-acetylserine mark. Positions 2 to 103 are interaction with PDCD6IP; that stretch reads SLYPSLEDLK…VAPVTGNDAG (102 aa). Short sequence motifs (LYPX(n)L motif) lie at residues 3-7, 46-50, and 50-54; these read LYPSL, LYPKL, and LYPEL. Position 6 is a phosphoserine (Ser-6). Tyr-47 is modified (phosphotyrosine). 2 PDZ domains span residues 115–194 and 199–273; these read EVIL…IRDR and TVTM…IMPT. 251–252 lines the a 1,2-diacyl-sn-glycero-3-phospho-(1D-myo-inositol-4,5-bisphosphate) pocket; sequence KD.

In terms of assembly, monomer and homodimer. Interacts with SDC1, SDC2, SDC3, SDC4, NRXN2, EPHA7, EPHB1, NF2 isoform 1, TGFA, IL5RA, NFASC, SDCBP2 and PTPRJ. Interacts with PDCD6IP. Forms a complex with PDCD6IP and SDC2. Interacts (via C-terminus) with TGFBR1. Binds to FZD7; this interaction is increased by inositol trisphosphate (IP3). Interacts with SMO. Post-translationally, phosphorylated on tyrosine residues.

The protein localises to the cell junction. It localises to the focal adhesion. Its subcellular location is the adherens junction. It is found in the cell membrane. The protein resides in the endoplasmic reticulum membrane. The protein localises to the nucleus. It localises to the melanosome. Its subcellular location is the cytoplasm. It is found in the cytosol. The protein resides in the cytoskeleton. The protein localises to the secreted. It localises to the extracellular exosome. Its subcellular location is the membrane raft. Its function is as follows. Multifunctional adapter protein involved in diverse array of functions including trafficking of transmembrane proteins, neuro and immunomodulation, exosome biogenesis, and tumorigenesis. Positively regulates TGFB1-mediated SMAD2/3 activation and TGFB1-induced epithelial-to-mesenchymal transition (EMT) and cell migration in various cell types. May increase TGFB1 signaling by enhancing cell-surface expression of TGFR1 by preventing the interaction between TGFR1 and CAV1 and subsequent CAV1-dependent internalization and degradation of TGFR1. In concert with SDC1/4 and PDCD6IP, regulates exosome biogenesis. Regulates migration, growth, proliferation, and cell cycle progression in a variety of cancer types. In adherens junctions may function to couple syndecans to cytoskeletal proteins or signaling components. Seems to couple transcription factor SOX4 to the IL-5 receptor (IL5RA). May also play a role in vesicular trafficking. Seems to be required for the targeting of TGFA to the cell surface in the early secretory pathway. The protein is Syntenin-1 (Sdcbp) of Mus musculus (Mouse).